We begin with the raw amino-acid sequence, 640 residues long: GATA zinc finger domain-containing protein 12 (640 aa).

Disordered stretches follow at residues 121-209 and 355-390; these read SNNI…NIPI and QQIR…HINN. 2 stretches are compositionally biased toward low complexity: residues 122 to 209 and 355 to 379; these read NNIP…NIPI and QQIR…QHQQ. Polar residues predominate over residues 380 to 390; sequence PPTNIPQHINN. Residues 506–531 form a GATA-type zinc finger; the sequence is CVNCKTSDTPEWRRGPQGAKTLCNAC.

This is GATA zinc finger domain-containing protein 12 (gtaL) from Dictyostelium discoideum (Social amoeba).